We begin with the raw amino-acid sequence, 263 residues long: Purine nucleoside phosphorylase SAV1187 (263 aa).

Residues His-79, Cys-124, and His-141 each coordinate Zn(2+).

It belongs to the purine nucleoside phosphorylase YfiH/LACC1 family. In terms of assembly, homodimer. Cu(2+) serves as cofactor. Requires Zn(2+) as cofactor.

It catalyses the reaction adenosine + phosphate = alpha-D-ribose 1-phosphate + adenine. The enzyme catalyses S-methyl-5'-thioadenosine + phosphate = 5-(methylsulfanyl)-alpha-D-ribose 1-phosphate + adenine. It carries out the reaction inosine + phosphate = alpha-D-ribose 1-phosphate + hypoxanthine. The catalysed reaction is adenosine + H2O + H(+) = inosine + NH4(+). Purine nucleoside enzyme that catalyzes the phosphorolysis of adenosine and inosine nucleosides, yielding D-ribose 1-phosphate and the respective free bases, adenine and hypoxanthine. Also catalyzes the phosphorolysis of S-methyl-5'-thioadenosine into adenine and S-methyl-5-thio-alpha-D-ribose 1-phosphate. Also has adenosine deaminase activity. The sequence is that of Purine nucleoside phosphorylase SAV1187 from Staphylococcus aureus (strain Mu50 / ATCC 700699).